Here is a 220-residue protein sequence, read N- to C-terminus: Adapter protein MecA (220 aa).

It belongs to the MecA family. Homodimer.

Functionally, enables the recognition and targeting of unfolded and aggregated proteins to the ClpC protease or to other proteins involved in proteolysis. In Enterococcus faecalis (strain ATCC 700802 / V583), this protein is Adapter protein MecA.